Here is a 310-residue protein sequence, read N- to C-terminus: Aspartate carbamoyltransferase catalytic subunit (310 aa).

2 residues coordinate carbamoyl phosphate: R59 and T60. K87 serves as a coordination point for L-aspartate. The carbamoyl phosphate site is built by R109, H139, and Q142. The L-aspartate site is built by R172 and R224. A265 and P266 together coordinate carbamoyl phosphate.

The protein belongs to the aspartate/ornithine carbamoyltransferase superfamily. ATCase family. Heterododecamer (2C3:3R2) of six catalytic PyrB chains organized as two trimers (C3), and six regulatory PyrI chains organized as three dimers (R2).

It carries out the reaction carbamoyl phosphate + L-aspartate = N-carbamoyl-L-aspartate + phosphate + H(+). It functions in the pathway pyrimidine metabolism; UMP biosynthesis via de novo pathway; (S)-dihydroorotate from bicarbonate: step 2/3. In terms of biological role, catalyzes the condensation of carbamoyl phosphate and aspartate to form carbamoyl aspartate and inorganic phosphate, the committed step in the de novo pyrimidine nucleotide biosynthesis pathway. The polypeptide is Aspartate carbamoyltransferase catalytic subunit (Lactococcus lactis subsp. cremoris (strain MG1363)).